The chain runs to 146 residues: ATP synthase epsilon chain (146 aa).

A disordered region spans residues 103–122 (SAKKRAEQHMQEAKEKHNER).

Belongs to the ATPase epsilon chain family. F-type ATPases have 2 components, CF(1) - the catalytic core - and CF(0) - the membrane proton channel. CF(1) has five subunits: alpha(3), beta(3), gamma(1), delta(1), epsilon(1). CF(0) has three main subunits: a, b and c.

It is found in the cell membrane. Its function is as follows. Produces ATP from ADP in the presence of a proton gradient across the membrane. This is ATP synthase epsilon chain from Lactobacillus johnsonii (strain CNCM I-12250 / La1 / NCC 533).